A 2193-amino-acid chain; its full sequence is Genome polyprotein (2193 aa).

Gly2 carries N-myristoyl glycine; by host lipidation. At 2–1503 the chain is on the cytoplasmic side; sequence GAQVSTQKTG…HVSRAFICLQ (1502 aa). Residues 565–582 are amphipathic alpha-helix; it reads QLLQGDVEEAVNRAVARV. Residues His880 and Asp898 each act as for protease 2A activity in the active site. Zn(2+) contacts are provided by Cys915 and Cys917. Cys969 (for protease 2A activity) is an active-site residue. Residues Cys975 and His977 each contribute to the Zn(2+) site. The tract at residues 1109-1181 is membrane-binding; the sequence is SNGWLKKFTE…EQSAPSQSDQ (73 aa). Positions 1109-1247 are oligomerization; the sequence is SNGWLKKFTE…SPGAGKSVAT (139 aa). The RNA-binding stretch occupies residues 1130–1134; that stretch reads AIKIQ. The SF3 helicase domain maps to 1213–1369; the sequence is EKKMSNYIQF…SMYSQNGKIN (157 aa). Residues Cys1377, Cys1389, and Cys1394 each coordinate Zn(2+). A C4-type; degenerate zinc finger spans residues 1377 to 1394; sequence CDEECCPVNFKRCCPLVC. The interval 1421–1428 is RNA-binding; sequence EYNHRHSV. The interval 1432–1437 is oligomerization; the sequence is LEALFQ. The stretch at 1504-1519 is an intramembrane region; the sequence is ALTTFVSVAGIIYIIY. The Cytoplasmic segment spans residues 1520-2193; it reads KLFAGFQGAY…TLRRKWLDSF (674 aa). Tyr1529 is subject to O-(5'-phospho-RNA)-tyrosine. Positions 1549-1727 constitute a Peptidase C3 domain; sequence GPAFEFAVAM…FSAALLRHYF (179 aa). Active-site for protease 3C activity residues include His1588, Glu1619, and Cys1695. The 117-residue stretch at 1958–2074 folds into the RdRp catalytic domain; it reads GHLIAFDYSG…SYPWPIDASL (117 aa). Mg(2+)-binding residues include Asp1964 and Asp2060.

Belongs to the picornaviruses polyprotein family. Interacts with capsid protein VP1 and capsid protein VP3 to form heterotrimeric protomers. As to quaternary structure, interacts with capsid protein VP0, and capsid protein VP3 to form heterotrimeric protomers. Five protomers subsequently associate to form pentamers which serve as building blocks for the capsid. Interacts with capsid protein VP2, capsid protein VP3 and capsid protein VP4 following cleavage of capsid protein VP0. In terms of assembly, interacts with capsid protein VP1 and capsid protein VP3 in the mature capsid. Interacts with host CD55; this interaction promotes virus attachment to the host cell and subsequent internalization. Interacts with capsid protein VP0 and capsid protein VP1 to form heterotrimeric protomers. Five protomers subsequently associate to form pentamers which serve as building blocks for the capsid. Interacts with capsid protein VP4 in the mature capsid. Interacts with protein 2C; this interaction may be important for virion morphogenesis. Interacts with host CD55; this interaction promotes virus attachment to the host cell and subsequent internalization. As to quaternary structure, interacts with capsid protein VP1 and capsid protein VP3. In terms of assembly, homodimer. Homohexamer; forms a hexameric ring structure with 6-fold symmetry characteristic of AAA+ ATPases. Interacts (via N-terminus) with host RTN3 (via reticulon domain); this interaction is important for viral replication. Interacts with capsid protein VP3; this interaction may be important for virion morphogenesis. As to quaternary structure, interacts with protein 3CD. In terms of assembly, homodimer. Interacts with host GBF1. Interacts (via GOLD domain) with host ACBD3 (via GOLD domain); this interaction allows the formation of a viral protein 3A/ACBD3 heterotetramer with a 2:2 stoichiometry, which will stimulate the recruitment of host PI4KB in order to synthesize PI4P at the viral RNA replication sites. Interacts with RNA-directed RNA polymerase. As to quaternary structure, interacts with protein 3AB and with RNA-directed RNA polymerase. In terms of assembly, interacts with Viral protein genome-linked and with protein 3CD. The cofactor is Mg(2+). Post-translationally, specific enzymatic cleavages in vivo by the viral proteases yield processing intermediates and the mature proteins. In terms of processing, myristoylation is required for the formation of pentamers during virus assembly. Further assembly of 12 pentamers and a molecule of genomic RNA generates the provirion. During virion maturation, immature virions are rendered infectious following cleavage of VP0 into VP4 and VP2. This maturation seems to be an autocatalytic event triggered by the presence of RNA in the capsid and it is followed by a conformational change infectious virion. Post-translationally, myristoylation is required during RNA encapsidation and formation of the mature virus particle. In terms of processing, VPg is uridylylated by the polymerase into VPg-pUpU. This acts as a nucleotide-peptide primer for the genomic RNA replication.

The protein localises to the virion. Its subcellular location is the host cytoplasm. The protein resides in the host cytoplasmic vesicle membrane. It localises to the host nucleus. It catalyses the reaction a ribonucleoside 5'-triphosphate + H2O = a ribonucleoside 5'-diphosphate + phosphate + H(+). The catalysed reaction is Selective cleavage of Tyr-|-Gly bond in the picornavirus polyprotein.. The enzyme catalyses RNA(n) + a ribonucleoside 5'-triphosphate = RNA(n+1) + diphosphate. It carries out the reaction Selective cleavage of Gln-|-Gly bond in the poliovirus polyprotein. In other picornavirus reactions Glu may be substituted for Gln, and Ser or Thr for Gly.. Its activity is regulated as follows. Replication or transcription is subject to high level of random mutations by the nucleotide analog ribavirin. Forms an icosahedral capsid of pseudo T=3 symmetry with capsid proteins VP2 and VP3. The capsid is 300 Angstroms in diameter, composed of 60 copies of each capsid protein and enclosing the viral positive strand RNA genome. Capsid protein VP1 mainly forms the vertices of the capsid. Capsid protein VP1 interacts with host cell receptor to provide virion attachment to target host cells. This attachment induces virion internalization. Tyrosine kinases are probably involved in the entry process. After binding to its receptor, the capsid undergoes conformational changes. Capsid protein VP1 N-terminus (that contains an amphipathic alpha-helix) and capsid protein VP4 are externalized. Together, they shape a pore in the host membrane through which viral genome is translocated to host cell cytoplasm. In terms of biological role, forms an icosahedral capsid of pseudo T=3 symmetry with capsid proteins VP2 and VP3. The capsid is 300 Angstroms in diameter, composed of 60 copies of each capsid protein and enclosing the viral positive strand RNA genome. Functionally, lies on the inner surface of the capsid shell. After binding to the host receptor, the capsid undergoes conformational changes. Capsid protein VP4 is released, Capsid protein VP1 N-terminus is externalized, and together, they shape a pore in the host membrane through which the viral genome is translocated into the host cell cytoplasm. Its function is as follows. Component of immature procapsids, which is cleaved into capsid proteins VP4 and VP2 after maturation. Allows the capsid to remain inactive before the maturation step. Cysteine protease that cleaves viral polyprotein and specific host proteins. It is responsible for the autocatalytic cleavage between the P1 and P2 regions, which is the first cleavage occurring in the polyprotein. Also cleaves the host translation initiation factor EIF4G1, in order to shut down the capped cellular mRNA translation. Inhibits the host nucleus-cytoplasm protein and RNA trafficking by cleaving host members of the nuclear pores. Counteracts stress granule formation probably by antagonizing its assembly or promoting its dissassembly. In terms of biological role, plays an essential role in the virus replication cycle by acting as a viroporin. Creates a pore in the host endoplasmic reticulum and as a consequence releases Ca2+ in the cytoplasm of infected cell. In turn, high levels of cytoplasmic calcium may trigger membrane trafficking and transport of viral ER-associated proteins to viroplasms, sites of viral genome replication. Functionally, induces and associates with structural rearrangements of intracellular membranes. Displays RNA-binding, nucleotide binding and NTPase activities. May play a role in virion morphogenesis and viral RNA encapsidation by interacting with the capsid protein VP3. Its function is as follows. Localizes the viral replication complex to the surface of membranous vesicles. Together with protein 3CD binds the Cis-Active RNA Element (CRE) which is involved in RNA synthesis initiation. Acts as a cofactor to stimulate the activity of 3D polymerase, maybe through a nucleid acid chaperone activity. Localizes the viral replication complex to the surface of membranous vesicles. It inhibits host cell endoplasmic reticulum-to-Golgi apparatus transport and causes the disassembly of the Golgi complex, possibly through GBF1 interaction. This would result in depletion of MHC, trail receptors and IFN receptors at the host cell surface. Plays an essential role in viral RNA replication by recruiting ACBD3 and PI4KB at the viral replication sites, thereby allowing the formation of the rearranged membranous structures where viral replication takes place. In terms of biological role, acts as a primer for viral RNA replication and remains covalently bound to viral genomic RNA. VPg is uridylylated prior to priming replication into VPg-pUpU. The oriI viral genomic sequence may act as a template for this. The VPg-pUpU is then used as primer on the genomic RNA poly(A) by the RNA-dependent RNA polymerase to replicate the viral genome. During genome replication, the VPg-RNA linkage is removed by the host TDP2, thereby accelerating replication. During the late stage of the replication cycle, host TDP2 is excluded from sites of viral RNA synthesis and encapsidation, allowing for the generation of progeny virions. Functionally, involved in the viral replication complex and viral polypeptide maturation. It exhibits protease activity with a specificity and catalytic efficiency that is different from protease 3C. Protein 3CD lacks polymerase activity. Protein 3CD binds to the 5'UTR of the viral genome. Its function is as follows. Replicates the viral genomic RNA on the surface of intracellular membranes. May form linear arrays of subunits that propagate along a strong head-to-tail interaction called interface-I. Covalently attaches UMP to a tyrosine of VPg, which is used to prime RNA synthesis. The positive stranded RNA genome is first replicated at virus induced membranous vesicles, creating a dsRNA genomic replication form. This dsRNA is then used as template to synthesize positive stranded RNA genomes. ss(+)RNA genomes are either translated, replicated or encapsidated. Major viral protease that mediates proteolytic processing of the polyprotein. Cleaves host EIF5B, contributing to host translation shutoff. Also cleaves host PABPC1, contributing to host translation shutoff. Cleaves host NLRP1, triggers host N-glycine-mediated degradation of the autoinhibitory NLRP1 N-terminal fragment. The chain is Genome polyprotein from Echovirus 12 (strain Travis).